A 337-amino-acid polypeptide reads, in one-letter code: Glyceraldehyde-3-phosphate dehydrogenase (337 aa).

NAD(+)-binding positions include 13 to 14, Asp35, and Lys80; that span reads RI. D-glyceraldehyde 3-phosphate contacts are provided by residues 151 to 153, Thr182, 211 to 212, and Arg234; these read SCT and TG. The Nucleophile role is filled by Cys152. Asn316 provides a ligand contact to NAD(+).

This sequence belongs to the glyceraldehyde-3-phosphate dehydrogenase family. Homotetramer.

The protein localises to the cytoplasm. The enzyme catalyses D-glyceraldehyde 3-phosphate + phosphate + NAD(+) = (2R)-3-phospho-glyceroyl phosphate + NADH + H(+). It participates in carbohydrate degradation; glycolysis; pyruvate from D-glyceraldehyde 3-phosphate: step 1/5. This chain is Glyceraldehyde-3-phosphate dehydrogenase (GAPD), found in Mycosarcoma maydis (Corn smut fungus).